A 101-amino-acid polypeptide reads, in one-letter code: Small ribosomal subunit protein uS14 (101 aa).

It belongs to the universal ribosomal protein uS14 family. In terms of assembly, part of the 30S ribosomal subunit. Contacts proteins S3 and S10.

Its function is as follows. Binds 16S rRNA, required for the assembly of 30S particles and may also be responsible for determining the conformation of the 16S rRNA at the A site. The chain is Small ribosomal subunit protein uS14 from Gluconobacter oxydans (strain 621H) (Gluconobacter suboxydans).